Consider the following 538-residue polypeptide: Putative cysteine ligase BshC (538 aa).

The stretch at 419–445 (IEAKRQIQAMEQLLAEKYSELASYLEE) forms a coiled coil.

The protein belongs to the BshC family.

Its function is as follows. Involved in bacillithiol (BSH) biosynthesis. May catalyze the last step of the pathway, the addition of cysteine to glucosamine malate (GlcN-Mal) to generate BSH. This Lysinibacillus sphaericus (strain C3-41) protein is Putative cysteine ligase BshC.